A 734-amino-acid polypeptide reads, in one-letter code: Photosystem I P700 chlorophyll a apoprotein A2 (734 aa).

8 helical membrane passes run 46-69, 135-158, 175-199, 273-291, 330-353, 369-395, 417-439, and 517-535; these read IFAS…FHVA, LYTG…LHLQ, LNHH…HVAI, MAHH…GHMY, IHFQ…QHMY, AALY…IFFI, AIIS…LYVH, and FLVH…LILV. Cys-559 and Cys-568 together coordinate [4Fe-4S] cluster. 2 helical membrane passes run 575–596 and 643–665; these read AFYL…YWHW and LSVW…MFLI. The chlorophyll a site is built by His-654, Met-662, and Tyr-670. Trp-671 provides a ligand contact to phylloquinone. A helical membrane pass occupies residues 707-727; sequence LVGLAHFSVGYIFTYAAFLIA.

The protein belongs to the PsaA/PsaB family. As to quaternary structure, the PsaA/B heterodimer binds the P700 chlorophyll special pair and subsequent electron acceptors. PSI consists of a core antenna complex that captures photons, and an electron transfer chain that converts photonic excitation into a charge separation. The eukaryotic PSI reaction center is composed of at least 11 subunits. It depends on P700 is a chlorophyll a/chlorophyll a' dimer, A0 is one or more chlorophyll a, A1 is one or both phylloquinones and FX is a shared 4Fe-4S iron-sulfur center. as a cofactor.

Its subcellular location is the plastid. It localises to the chloroplast thylakoid membrane. The enzyme catalyses reduced [plastocyanin] + hnu + oxidized [2Fe-2S]-[ferredoxin] = oxidized [plastocyanin] + reduced [2Fe-2S]-[ferredoxin]. PsaA and PsaB bind P700, the primary electron donor of photosystem I (PSI), as well as the electron acceptors A0, A1 and FX. PSI is a plastocyanin-ferredoxin oxidoreductase, converting photonic excitation into a charge separation, which transfers an electron from the donor P700 chlorophyll pair to the spectroscopically characterized acceptors A0, A1, FX, FA and FB in turn. Oxidized P700 is reduced on the lumenal side of the thylakoid membrane by plastocyanin. In Triticum aestivum (Wheat), this protein is Photosystem I P700 chlorophyll a apoprotein A2.